A 173-amino-acid polypeptide reads, in one-letter code: Pyrimidine operon regulatory protein (173 aa).

Residues 40–41, 97–105, and R130 contribute to the substrate site; these read TR and DDVLYTGRT. The PRPP-binding motif lies at 93–105; that stretch reads VILVDDVLYTGRT.

It belongs to the purine/pyrimidine phosphoribosyltransferase family. PyrR subfamily.

Its function is as follows. Regulates transcriptional attenuation of the pyrimidine nucleotide (pyr) operon in response to exogenous pyrimidines, probably by binding to specific sites on pyr mRNA. This probably disrupts an antiterminator hairpin in the RNA and favors formation of a downstream transcription terminator, leading to a reduced expression of downstream genes. The protein is Pyrimidine operon regulatory protein of Lactococcus lactis subsp. lactis (strain IL1403) (Streptococcus lactis).